The chain runs to 969 residues: Integrator complex subunit 4 (969 aa).

HEAT repeat units follow at residues 68–107 (AESV…TAGF), 147–185 (VSHR…VEAS), 192–230 (NAVA…RGLK), 231–265 (LQQA…SQLY), 279–315 (IRLV…LQVS), 371–407 (NLID…ARSS), 408–446 (APFA…NITL), and 448–486 (EDQL…CIQL). The span at 928-949 (RASNSTWGESTETVPSTESSTE) shows a compositional bias: low complexity. Residues 928 to 950 (RASNSTWGESTETVPSTESSTEG) form a disordered region.

This sequence belongs to the Integrator subunit 4 family. Component of the Integrator complex, composed of core subunits INTS1, INTS2, INTS3, INTS4, INTS5, INTS6, INTS7, INTS8, INTS9/RC74, INTS10, INTS11/CPSF3L, INTS12, INTS13, INTS14 and INTS15. The core complex associates with protein phosphatase 2A subunits PPP2CA and PPP2R1A, to form the Integrator-PP2A (INTAC) complex. INTS4 is part of the RNA endonuclease subcomplex, composed of INTS4, INTS9, INTS11 and inositol hexakisphosphate (InsP6).

It is found in the nucleus. It localises to the cytoplasm. Functionally, component of the integrator complex, a multiprotein complex that terminates RNA polymerase II (Pol II) transcription in the promoter-proximal region of genes. The integrator complex provides a quality checkpoint during transcription elongation by driving premature transcription termination of transcripts that are unfavorably configured for transcriptional elongation: the complex terminates transcription by (1) catalyzing dephosphorylation of the C-terminal domain (CTD) of Pol II subunit POLR2A/RPB1 and SUPT5H/SPT5, (2) degrading the exiting nascent RNA transcript via endonuclease activity and (3) promoting the release of Pol II from bound DNA. The integrator complex is also involved in terminating the synthesis of non-coding Pol II transcripts, such as enhancer RNAs (eRNAs), small nuclear RNAs (snRNAs), telomerase RNAs and long non-coding RNAs (lncRNAs). The sequence is that of Integrator complex subunit 4 (ints4) from Xenopus laevis (African clawed frog).